Here is a 171-residue protein sequence, read N- to C-terminus: UPF0398 protein M6_Spy1399 (171 aa).

This sequence belongs to the UPF0398 family.

This chain is UPF0398 protein M6_Spy1399, found in Streptococcus pyogenes serotype M6 (strain ATCC BAA-946 / MGAS10394).